A 250-amino-acid polypeptide reads, in one-letter code: Methylthioribulose-1-phosphate dehydratase (250 aa).

Residues His-103 and His-105 each contribute to the Zn(2+) site.

It belongs to the aldolase class II family. MtnB subfamily. Zn(2+) serves as cofactor.

The enzyme catalyses 5-(methylsulfanyl)-D-ribulose 1-phosphate = 5-methylsulfanyl-2,3-dioxopentyl phosphate + H2O. Its pathway is amino-acid biosynthesis; L-methionine biosynthesis via salvage pathway; L-methionine from S-methyl-5-thio-alpha-D-ribose 1-phosphate: step 2/6. In terms of biological role, catalyzes the dehydration of methylthioribulose-1-phosphate (MTRu-1-P) into 2,3-diketo-5-methylthiopentyl-1-phosphate (DK-MTP-1-P). The protein is Methylthioribulose-1-phosphate dehydratase of Leptospira borgpetersenii serovar Hardjo-bovis (strain JB197).